The sequence spans 529 residues: Glycylpeptide N-tetradecanoyltransferase 2 (529 aa).

Residues 1–82 (MAEDSESAAS…QEIKIQQSSK (82 aa)) are disordered. Residues 15–32 (ELDDQDTCGIDGDNEEET) are compositionally biased toward acidic residues. A Phosphoserine modification is found at serine 38. Residues 46–57 (KKKKKKQKRKKE) are compositionally biased toward basic residues. The span at 61–82 (SGGTKSDSASDSQEIKIQQSSK) shows a compositional bias: polar residues. Tetradecanoyl-CoA-binding residues include tryptophan 153, leucine 281, valine 283, serine 289, arginine 291, valine 292, and alanine 293.

The protein belongs to the NMT family.

It localises to the cytoplasm. The protein resides in the membrane. The catalysed reaction is N-terminal glycyl-[protein] + tetradecanoyl-CoA = N-tetradecanoylglycyl-[protein] + CoA + H(+). It catalyses the reaction N-terminal glycyl-L-lysyl-[protein] + tetradecanoyl-CoA = N-terminal glycyl-(N(6)-tetradecanoyl)-L-lysyl-[protein] + CoA + H(+). Functionally, adds a myristoyl group to the N-terminal glycine residue of certain cellular and viral proteins. Also able to mediate N-terminal lysine myristoylation of proteins: catalyzes myristoylation of ARF6 on both 'Gly-2' and 'Lys-3'. Lysine myristoylation is required to maintain ARF6 on membranes during the GTPase cycle. This chain is Glycylpeptide N-tetradecanoyltransferase 2 (Nmt2), found in Mus musculus (Mouse).